A 1317-amino-acid chain; its full sequence is MLDVNFFDELRIGLATADDIRNWSFGEVKKPETINYRTLKPEKDGLFCEKIFGPTRDWECYCGKYKRVRFKGIICERCGVEVTRAKVRRERMGHIELAAPVTHIWYFKGVPSRLGYLLDLAPKDLEKIIYFAAYVITAVDDEMRHNELSTLEAEMAVERKAIEDQRDADLEARAQKLEADMKELEDEGAKSDVKRKVRDGGEREMRQLRDRAQRELDRLEEIWTTFTKLAPKQLIVDELLYRELQDRYGEYFEGAMGAESIKKLIENFDIDAEAESLRDTIKNGKGQKKLRALKRLKVVAAFQTNRNSPMGMVLDAVPVIPPELRPMVQLDGGRFATSDLNDLYRRVINRNNRLKRLIDLGAPEIIVNNEKRMLQESVDALFDNGRRGRPVTGPGNRPLKSLSDLLKGKQGRFRQNLLGKRVDYSGRSVIVVGPQLKLHQCGLPKLMALELFKPFVMKRLVDLNHAQNIKSAKRMVERQRPQVWDVLEEVIAEHPVLLNRAPTLHRLGIQAFEPQLVEGKAIQLHPLVCEAFNADFDGDQMAVHLPLSAEAQAEARILMLSSNNILSPASGRPLAMPRLDMVTGLYFLTTEIEGDTGEFTPAAKDQPESGVYSSPAEAIMALDRGALSVRAKIRVRLTQLRPPAEIEAERFPDGWNMGDAWTAETTLGRVLFNELLPRGYPFVNKQMHKKVQAAIINDLAERYPMIVVAQTVDKLKDAGFYWATRSGVTVSMADVLVPPEKQEILERYEAEADSIEKQYQRGKLNKDERNEALVKIWQDATEEVGQALRSHYPKDNPIITIVDSGATGNFTQTRTLAGMKGLVTNPKGEFIPRPIKSSFREGLTVLEYFINTHGARKGLADTALRTADSGYLTRRLVDVSQDVIVRETDCETERGITVTLAEKQADGTLVRDQHIETSAYARTLATDAVDAKGNVIVERGHDLGDPAIDALLAAGITEVKVRSVLTCGTGTGVCAMCYGRSMATGKLVDIGEAVGIVAAQSIGEPGTQLTMRTFHQGGVTGGADIVGGLPRVQELFEARIPRNRAPIADVSGRIRLEESDKFYKITIVPDDGGEEVVYDKLSRRQRLKVFKHDDGSERLLTDGDHVEVGQQLLEGSADPHEVLRVQGPREVQIHLVKEVQEVYRAQGVSIHDKHIEVIVRQMLRRVTIIDSGATEFLPGSLTERGEFETENRRVVAEGGEPAAGRPVLMGITKASLATDSWLSAASFQETTRVLTDAAINCRSDKLQGLKENVIIGKLIPAGTGINRYRNIQVQPTEEARAAAYTIPSYEDQYYSPDFGQATGAAVPLDDYGYSDYR.

Zn(2+)-binding residues include cysteine 60, cysteine 62, cysteine 75, and cysteine 78. The tract at residues glutamate 183–arginine 209 is disordered. 3 residues coordinate Mg(2+): aspartate 535, aspartate 537, and aspartate 539. Zn(2+) contacts are provided by cysteine 890, cysteine 967, cysteine 974, and cysteine 977.

The protein belongs to the RNA polymerase beta' chain family. In terms of assembly, the RNAP catalytic core consists of 2 alpha, 1 beta, 1 beta' and 1 omega subunit. When a sigma factor is associated with the core the holoenzyme is formed, which can initiate transcription. It depends on Mg(2+) as a cofactor. Requires Zn(2+) as cofactor.

It carries out the reaction RNA(n) + a ribonucleoside 5'-triphosphate = RNA(n+1) + diphosphate. Functionally, DNA-dependent RNA polymerase catalyzes the transcription of DNA into RNA using the four ribonucleoside triphosphates as substrates. The sequence is that of DNA-directed RNA polymerase subunit beta' from Mycolicibacterium vanbaalenii (strain DSM 7251 / JCM 13017 / BCRC 16820 / KCTC 9966 / NRRL B-24157 / PYR-1) (Mycobacterium vanbaalenii).